The following is a 226-amino-acid chain: tRNA (guanine-N(1)-)-methyltransferase (226 aa).

Residues glycine 110 and 130–135 (IGDFIL) each bind S-adenosyl-L-methionine.

The protein belongs to the RNA methyltransferase TrmD family. Homodimer.

The protein localises to the cytoplasm. The catalysed reaction is guanosine(37) in tRNA + S-adenosyl-L-methionine = N(1)-methylguanosine(37) in tRNA + S-adenosyl-L-homocysteine + H(+). In terms of biological role, specifically methylates guanosine-37 in various tRNAs. The sequence is that of tRNA (guanine-N(1)-)-methyltransferase from Nitratiruptor sp. (strain SB155-2).